Here is a 463-residue protein sequence, read N- to C-terminus: Metacaspase-1 (463 aa).

The disordered stretch occupies residues 1-149 (MSWNQYPGGG…PQLQGQGGQS (149 aa)). Over residues 7–18 (PGGGHHQQGGYG) the composition is skewed to gly residues. The span at 20–56 (RPPPPQWAQQGPPPPPNMGYRPPPPPQAYYNNPPPPQ) shows a compositional bias: pro residues. Positions 57–83 (QYQRPAPQQNGYQQGGYQQQQQSQGNY) are enriched in low complexity. Residues histidine 247 and cysteine 309 contribute to the active site.

The protein belongs to the peptidase C14B family.

In terms of biological role, involved in cell death (apoptosis). This Cryptococcus neoformans var. neoformans serotype D (strain B-3501A) (Filobasidiella neoformans) protein is Metacaspase-1 (MCA1).